A 404-amino-acid chain; its full sequence is Probable protein phosphatase 1N (404 aa).

Residues 59–319 form the PPM-type phosphatase domain; it reads RFGASAVQGW…DNMTCMVVCF (261 aa). Residues aspartate 96, glycine 97, aspartate 267, and aspartate 310 each contribute to the Mn(2+) site.

This sequence belongs to the PP2C family. Requires Mg(2+) as cofactor. Mn(2+) is required as a cofactor.

It catalyses the reaction O-phospho-L-seryl-[protein] + H2O = L-seryl-[protein] + phosphate. It carries out the reaction O-phospho-L-threonyl-[protein] + H2O = L-threonyl-[protein] + phosphate. This Mus musculus (Mouse) protein is Probable protein phosphatase 1N (Ppm1n).